The sequence spans 101 residues: Small ribosomal subunit protein uS14 (101 aa).

The protein belongs to the universal ribosomal protein uS14 family. In terms of assembly, part of the 30S ribosomal subunit. Contacts proteins S3 and S10.

In terms of biological role, binds 16S rRNA, required for the assembly of 30S particles and may also be responsible for determining the conformation of the 16S rRNA at the A site. This Shewanella frigidimarina (strain NCIMB 400) protein is Small ribosomal subunit protein uS14.